The chain runs to 123 residues: uncharacterized protein (123 aa).

The next 2 membrane-spanning stretches (helical) occupy residues 53–73 and 75–95; these read VWFL…FFFL and VLWF…VFSH.

The protein resides in the membrane. This is an uncharacterized protein from Saccharomyces cerevisiae (strain ATCC 204508 / S288c) (Baker's yeast).